A 222-amino-acid polypeptide reads, in one-letter code: MAALAMRSGYLLRLSVALGPRSRSYRAPPPPRRRPGPHSPDPENLLTPRWQLTPRYVAKQFGRHGAISGVPPASLWPTPEQLRELEAEEQEWYPSLATMQESLRLQQQALEARRQAREQRIAECMAKMPQMIENWRKQKRERWEKIQADKERRARLQAEAQERLGYHVDPRSARFQELLQDLDKQQRKRLKEERQRQKKEARIAAMASAEAQDSAVSGEPSS.

Disordered regions lie at residues 21–47 and 186–222; these read RSRS…NLLT and QRKR…EPSS. The stretch at 98–207 forms a coiled coil; sequence TMQESLRLQQ…KKEARIAAMA (110 aa). Positions 184 to 200 match the Nuclear localization signal motif; sequence KQQRKRLKEERQRQKKE. Over residues 186–202 the composition is skewed to basic and acidic residues; sequence QRKRLKEERQRQKKEAR. Low complexity predominate over residues 203 to 215; sequence IAAMASAEAQDSA.

The protein belongs to the mitochondrion-specific ribosomal protein mL64 family. As to quaternary structure, component of the mitochondrial ribosome large subunit (39S) which comprises a 16S rRNA and about 50 distinct proteins. Interacts with GADD45A, GADD45B and GADD45G. Interacts with NR4A1 via the NR4A1 AB domain. Interacts with ATAD3A and ATAD3B.

The protein resides in the mitochondrion. The protein localises to the nucleus. Functionally, acts as a negative regulator of G1 to S cell cycle phase progression by inhibiting cyclin-dependent kinases. Inhibitory effects are additive with GADD45 proteins but also occur in the absence of GADD45 proteins. Acts as a repressor of the orphan nuclear receptor NR4A1 by inhibiting AB domain-mediated transcriptional activity. May be involved in the hormone-mediated regulation of NR4A1 transcriptional activity. May play a role in mitochondrial protein synthesis. In Mus musculus (Mouse), this protein is Large ribosomal subunit protein mL64 (Gadd45gip1).